Here is a 411-residue protein sequence, read N- to C-terminus: Cytochrome P450 monooxygenase sirE (411 aa).

Asn12 and Asn149 each carry an N-linked (GlcNAc...) asparagine glycan. Residues 181 to 203 form a helical membrane-spanning segment; sequence FLNVISIFTVMMASLNVLYDILA. N-linked (GlcNAc...) asparagine glycosylation is present at Asn342. Residue Cys352 participates in heme binding.

The protein belongs to the cytochrome P450 family. Heme serves as cofactor.

It localises to the membrane. Its pathway is mycotoxin biosynthesis. Its function is as follows. Cytochrome P450 monooxygenase; part of the gene cluster that mediates the biosynthesis of sirodesmin PL, an epipolythiodioxopiperazine (ETP) characterized by a disulfide bridged cyclic dipeptide and that acts as a phytotoxin which is involved in the blackleg didease of canola. SirD catalyzes the O-prenylation of L-tyrosine (L-Tyr) in the presence of dimethylallyl diphosphate (DMAPP) to yield 4-O-dimethylallyl-L-Tyr, and therefore represents probably the first pathway-specific enzyme in the biosynthesis of sirodesmin PL. 4-O-dimethylallyl-L-Tyr, then undergoes condensation with L-Ser in a reaction catalyzed by the non-ribosomal peptide synthase sirP to form the diketopiperazine (DKP) backbone. Further bishydroxylation of the DKP performed by the cytochrome P450 monooxygenase sirC leads to the production of the intermediate phomamide. This step is essential to form the reactive thiol group required for toxicity of sirodesmin PL. The next steps of sirodesmin biosynthesis are not well understood yet, but some predictions could be made from intermediate compounds identification. Phomamide is converted into phomalizarine via oxidation, probably by sirT. Further oxidation, methylation (by sirM or sirN) and reduction steps convert phomalizarine to deacetyl sirodesmin. Finally, acetyltransferase sirH probably acetylates deacetyl sirodesmin to produce sirodesmin PL. The sequence is that of Cytochrome P450 monooxygenase sirE from Leptosphaeria maculans (Blackleg fungus).